A 179-amino-acid chain; its full sequence is ATP synthase subunit b (179 aa).

Residues 23–43 (IFWLIITFGILYVVLSKLILP) form a helical membrane-spanning segment.

The protein belongs to the ATPase B chain family. As to quaternary structure, F-type ATPases have 2 components, F(1) - the catalytic core - and F(0) - the membrane proton channel. F(1) has five subunits: alpha(3), beta(3), gamma(1), delta(1), epsilon(1). F(0) has three main subunits: a(1), b(2) and c(10-14). The alpha and beta chains form an alternating ring which encloses part of the gamma chain. F(1) is attached to F(0) by a central stalk formed by the gamma and epsilon chains, while a peripheral stalk is formed by the delta and b chains.

The protein localises to the cell inner membrane. In terms of biological role, f(1)F(0) ATP synthase produces ATP from ADP in the presence of a proton or sodium gradient. F-type ATPases consist of two structural domains, F(1) containing the extramembraneous catalytic core and F(0) containing the membrane proton channel, linked together by a central stalk and a peripheral stalk. During catalysis, ATP synthesis in the catalytic domain of F(1) is coupled via a rotary mechanism of the central stalk subunits to proton translocation. Its function is as follows. Component of the F(0) channel, it forms part of the peripheral stalk, linking F(1) to F(0). The chain is ATP synthase subunit b from Pelagibacter ubique (strain HTCC1062).